A 67-amino-acid polypeptide reads, in one-letter code: MNVKTVKCPSCGKPVPWVPESRYRPFCSERCKQIDLGAWAAEQYTIPVVEEDDLPDAPGNDTSGKLN.

Residues Cys8, Cys11, Cys27, and Cys31 each coordinate Zn(2+).

The protein belongs to the DNA gyrase inhibitor YacG family. As to quaternary structure, interacts with GyrB. Requires Zn(2+) as cofactor.

Inhibits all the catalytic activities of DNA gyrase by preventing its interaction with DNA. Acts by binding directly to the C-terminal domain of GyrB, which probably disrupts DNA binding by the gyrase. This is DNA gyrase inhibitor YacG from Ralstonia pickettii (strain 12J).